The primary structure comprises 698 residues: Elongation factor G (698 aa).

One can recognise a tr-type G domain in the interval 10–285; it reads AGTRNIGIMA…AVVDFLPNPL (276 aa). GTP is bound by residues 19–26, 83–87, and 137–140; these read AHIDAGKT, DTPGH, and NKMD.

It belongs to the TRAFAC class translation factor GTPase superfamily. Classic translation factor GTPase family. EF-G/EF-2 subfamily.

The protein resides in the cytoplasm. Functionally, catalyzes the GTP-dependent ribosomal translocation step during translation elongation. During this step, the ribosome changes from the pre-translocational (PRE) to the post-translocational (POST) state as the newly formed A-site-bound peptidyl-tRNA and P-site-bound deacylated tRNA move to the P and E sites, respectively. Catalyzes the coordinated movement of the two tRNA molecules, the mRNA and conformational changes in the ribosome. The polypeptide is Elongation factor G (Frankia casuarinae (strain DSM 45818 / CECT 9043 / HFP020203 / CcI3)).